A 95-amino-acid polypeptide reads, in one-letter code: MQVLVRDNNVDQALKALKKKMQREGIFREMKLRGHYEKPSEKKAREKAEAVRRARKLARKKMQREGLLPMKPKPVFGAGPGAGRGGPAAGPRGPR.

The disordered stretch occupies residues 56 to 95; that stretch reads KLARKKMQREGLLPMKPKPVFGAGPGAGRGGPAAGPRGPR. Positions 78-88 are enriched in gly residues; it reads AGPGAGRGGPA.

Belongs to the bacterial ribosomal protein bS21 family.

The sequence is that of Small ribosomal subunit protein bS21 from Nitrobacter winogradskyi (strain ATCC 25391 / DSM 10237 / CIP 104748 / NCIMB 11846 / Nb-255).